A 345-amino-acid chain; its full sequence is Dihydroorotase (345 aa).

Histidine 13 and histidine 15 together coordinate Zn(2+). Residues 15–17 (HFR) and asparagine 41 each bind substrate. The Zn(2+) site is built by lysine 98, histidine 135, and histidine 173. Position 98 is an N6-carboxylysine (lysine 98). Histidine 135 serves as a coordination point for substrate. Leucine 218 contacts substrate. Aspartate 246 provides a ligand contact to Zn(2+). The active site involves aspartate 246. 2 residues coordinate substrate: histidine 250 and alanine 262.

It belongs to the metallo-dependent hydrolases superfamily. DHOase family. Class II DHOase subfamily. In terms of assembly, homodimer. Zn(2+) is required as a cofactor.

The catalysed reaction is (S)-dihydroorotate + H2O = N-carbamoyl-L-aspartate + H(+). It participates in pyrimidine metabolism; UMP biosynthesis via de novo pathway; (S)-dihydroorotate from bicarbonate: step 3/3. In terms of biological role, catalyzes the reversible cyclization of carbamoyl aspartate to dihydroorotate. In Shewanella pealeana (strain ATCC 700345 / ANG-SQ1), this protein is Dihydroorotase.